A 63-amino-acid chain; its full sequence is uncharacterized protein (63 aa).

The N-terminal stretch at 1–18 (MLNSEHFNLIQRALDATA) is a signal peptide.

This is an uncharacterized protein from Bacillus subtilis (strain 168).